The chain runs to 312 residues: Glyoxylate/hydroxypyruvate reductase A (312 aa).

Arginine 227 is an active-site residue. Residue histidine 275 is the Proton donor of the active site.

The protein belongs to the D-isomer specific 2-hydroxyacid dehydrogenase family. GhrA subfamily.

The protein resides in the cytoplasm. The enzyme catalyses glycolate + NADP(+) = glyoxylate + NADPH + H(+). It carries out the reaction (R)-glycerate + NAD(+) = 3-hydroxypyruvate + NADH + H(+). The catalysed reaction is (R)-glycerate + NADP(+) = 3-hydroxypyruvate + NADPH + H(+). Its function is as follows. Catalyzes the NADPH-dependent reduction of glyoxylate and hydroxypyruvate into glycolate and glycerate, respectively. This Klebsiella pneumoniae (strain 342) protein is Glyoxylate/hydroxypyruvate reductase A.